Consider the following 361-residue polypeptide: Ribosomal RNA large subunit methyltransferase M (361 aa).

Residues Ser187, 220 to 223 (CPGG), Asp239, Asp259, and Asp276 each bind S-adenosyl-L-methionine. Lys305 (proton acceptor) is an active-site residue.

It belongs to the class I-like SAM-binding methyltransferase superfamily. RNA methyltransferase RlmE family. RlmM subfamily. Monomer.

The protein localises to the cytoplasm. It carries out the reaction cytidine(2498) in 23S rRNA + S-adenosyl-L-methionine = 2'-O-methylcytidine(2498) in 23S rRNA + S-adenosyl-L-homocysteine + H(+). Catalyzes the 2'-O-methylation at nucleotide C2498 in 23S rRNA. This chain is Ribosomal RNA large subunit methyltransferase M, found in Shewanella amazonensis (strain ATCC BAA-1098 / SB2B).